Here is a 469-residue protein sequence, read N- to C-terminus: MSPQTETKASVGFKAGVKDYKLTYYTPEYETLDTDILAAFRVSPQPGVPPEEAGAAVAAESSTGTWTTVWTDGLTSLDRYKGRCYHIEPVAGEENQYICYVAYPLDLFEEGSVTNMFTSIVGNVFGFKALRALRLEDLRIPVAYIKTFQGPPHGIQVERDKLNKYGRPLLGCTIKPKLGLSAKNYGRAVYEVLRGGLDFTKDDENVNSQPFMRWRDRFLFCAEALYKAQAETGEIKGHYLNATAGTCEDMMKRAVFARELGVPIVMHDYLTGGFTANTTLAHYCRDNGLLLHIHRAMHAVIDRQKNHGMHFRVLAKALRLSGGDHIHSGTVVGKLEGERDITLGFVDLLRDDYTEKDRSRGIYFTQSWVSTPGVLPVASGGIHVWHMPALTEIFGDDSVLQFGGGTLGHPWGNAPGAVANRVALEACVQARNEGRDLAREGNTIIREASKWSPELAAACEIWKEIKFEF.

Positions 1–2 are excised as a propeptide; it reads MS. Pro3 bears the N-acetylproline mark. Lys14 is modified (N6,N6,N6-trimethyllysine). Substrate contacts are provided by Asn123 and Thr173. Lys175 acts as the Proton acceptor in catalysis. Lys177 is a substrate binding site. Residues Lys201, Asp203, and Glu204 each coordinate Mg(2+). An N6-carboxylysine modification is found at Lys201. The Proton acceptor role is filled by His294. Positions 295, 327, and 379 each coordinate substrate.

It belongs to the RuBisCO large chain family. Type I subfamily. In terms of assembly, heterohexadecamer of 8 large chains and 8 small chains; disulfide-linked. The disulfide link is formed within the large subunit homodimers. Mg(2+) serves as cofactor. In terms of processing, the disulfide bond which can form in the large chain dimeric partners within the hexadecamer appears to be associated with oxidative stress and protein turnover.

It is found in the plastid. Its subcellular location is the chloroplast. It carries out the reaction 2 (2R)-3-phosphoglycerate + 2 H(+) = D-ribulose 1,5-bisphosphate + CO2 + H2O. The enzyme catalyses D-ribulose 1,5-bisphosphate + O2 = 2-phosphoglycolate + (2R)-3-phosphoglycerate + 2 H(+). RuBisCO catalyzes two reactions: the carboxylation of D-ribulose 1,5-bisphosphate, the primary event in carbon dioxide fixation, as well as the oxidative fragmentation of the pentose substrate in the photorespiration process. Both reactions occur simultaneously and in competition at the same active site. This Atriplex patula (Common orache) protein is Ribulose bisphosphate carboxylase large chain.